The sequence spans 316 residues: Probable cell division protein WhiA (316 aa).

Residues 280–313 constitute a DNA-binding region (H-T-H motif); that stretch reads SLKELGEMLEPPVGKSGVNHRLRKIEKIAEELRT.

The protein belongs to the WhiA family.

Its function is as follows. Involved in cell division and chromosome segregation. The protein is Probable cell division protein WhiA of Clostridium perfringens (strain 13 / Type A).